Here is a 142-residue protein sequence, read N- to C-terminus: SsrA-binding protein (142 aa).

Belongs to the SmpB family.

The protein localises to the cytoplasm. Required for rescue of stalled ribosomes mediated by trans-translation. Binds to transfer-messenger RNA (tmRNA), required for stable association of tmRNA with ribosomes. tmRNA and SmpB together mimic tRNA shape, replacing the anticodon stem-loop with SmpB. tmRNA is encoded by the ssrA gene; the 2 termini fold to resemble tRNA(Ala) and it encodes a 'tag peptide', a short internal open reading frame. During trans-translation Ala-aminoacylated tmRNA acts like a tRNA, entering the A-site of stalled ribosomes, displacing the stalled mRNA. The ribosome then switches to translate the ORF on the tmRNA; the nascent peptide is terminated with the 'tag peptide' encoded by the tmRNA and targeted for degradation. The ribosome is freed to recommence translation, which seems to be the essential function of trans-translation. The protein is SsrA-binding protein of Mycoplasma mobile (strain ATCC 43663 / 163K / NCTC 11711) (Mesomycoplasma mobile).